A 437-amino-acid chain; its full sequence is ATP-dependent protease ATPase subunit HslU (437 aa).

ATP contacts are provided by residues V18, 60–65 (GCGKTE), D250, E315, and R387.

Belongs to the ClpX chaperone family. HslU subfamily. A double ring-shaped homohexamer of HslV is capped on each side by a ring-shaped HslU homohexamer. The assembly of the HslU/HslV complex is dependent on binding of ATP.

It localises to the cytoplasm. ATPase subunit of a proteasome-like degradation complex; this subunit has chaperone activity. The binding of ATP and its subsequent hydrolysis by HslU are essential for unfolding of protein substrates subsequently hydrolyzed by HslV. HslU recognizes the N-terminal part of its protein substrates and unfolds these before they are guided to HslV for hydrolysis. The protein is ATP-dependent protease ATPase subunit HslU of Methylobacterium sp. (strain 4-46).